The following is a 58-amino-acid chain: Large ribosomal subunit protein uL30 (58 aa).

It belongs to the universal ribosomal protein uL30 family. As to quaternary structure, part of the 50S ribosomal subunit.

The protein is Large ribosomal subunit protein uL30 of Trichlorobacter lovleyi (strain ATCC BAA-1151 / DSM 17278 / SZ) (Geobacter lovleyi).